A 317-amino-acid polypeptide reads, in one-letter code: Ribosomal RNA small subunit methyltransferase H (317 aa).

S-adenosyl-L-methionine is bound by residues 39–41 (GGH), D59, F83, D104, and Q111.

It belongs to the methyltransferase superfamily. RsmH family.

The protein localises to the cytoplasm. It carries out the reaction cytidine(1402) in 16S rRNA + S-adenosyl-L-methionine = N(4)-methylcytidine(1402) in 16S rRNA + S-adenosyl-L-homocysteine + H(+). Specifically methylates the N4 position of cytidine in position 1402 (C1402) of 16S rRNA. The polypeptide is Ribosomal RNA small subunit methyltransferase H (Paraburkholderia phytofirmans (strain DSM 17436 / LMG 22146 / PsJN) (Burkholderia phytofirmans)).